Consider the following 344-residue polypeptide: FCS-Like Zinc finger 10 (344 aa).

The FLZ-type zinc-finger motif lies at 270-314; it reads DFLSFCYGCSKKLGMGEDIYMYSGYKAFCSSECRSKEIDLDEEME. Acidic residues predominate over residues 309-320; it reads LDEEMEDGDEEE. Positions 309-344 are disordered; sequence LDEEMEDGDEEEAIKSVSSSDKESKKKSNGVFFTVG.

It belongs to the FLZ family. As to quaternary structure, interacts with KIN10 and KIN11 via its FLZ-type zinc finger domain. Interacts with KINB1, KINB2 and KINB3 via its N-terminal part. Forms homodimer and heterodimer with FLZ2 and FLZ12 in vitro. As to expression, early expressed in hypocotyl and cotyledon and preferentially in the stelar region of the shoot and root. Later expressed in root-shoot junction, lateral root, old or senescing leaves and in pistil and pollen of flower buds or open flowers.

It localises to the cytoplasm. It is found in the nucleus. The protein localises to the endoplasmic reticulum. In terms of biological role, may act as an adapter to facilitate the interaction of SnRK1 complex with effector proteins, conferring tissue- and stimulus-type specific differences in the SnRK1 regulation pathway. Negatively regulates KIN10 leading to a repression of the SnRK1 signaling pathway. The chain is FCS-Like Zinc finger 10 from Arabidopsis thaliana (Mouse-ear cress).